A 396-amino-acid chain; its full sequence is Elongation factor Tu (396 aa).

The region spanning 10 to 205 is the tr-type G domain; that stretch reads KPHVNIGTIG…AVDESIPDPV (196 aa). A G1 region spans residues 19 to 26; that stretch reads GHVDHGKT. 19–26 is a GTP binding site; the sequence is GHVDHGKT. Threonine 26 serves as a coordination point for Mg(2+). The G2 stretch occupies residues 62–66; that stretch reads GITIN. Residues 83–86 are G3; it reads DAPG. GTP contacts are provided by residues 83–87 and 138–141; these read DAPGH and NKAD. The segment at 138-141 is G4; that stretch reads NKAD. The segment at 175–177 is G5; it reads SGL.

The protein belongs to the TRAFAC class translation factor GTPase superfamily. Classic translation factor GTPase family. EF-Tu/EF-1A subfamily. As to quaternary structure, monomer.

It localises to the cytoplasm. It carries out the reaction GTP + H2O = GDP + phosphate + H(+). In terms of biological role, GTP hydrolase that promotes the GTP-dependent binding of aminoacyl-tRNA to the A-site of ribosomes during protein biosynthesis. The polypeptide is Elongation factor Tu (Nocardia farcinica (strain IFM 10152)).